A 73-amino-acid polypeptide reads, in one-letter code: Large ribosomal subunit protein bL31 (73 aa).

Belongs to the bacterial ribosomal protein bL31 family. Type A subfamily. As to quaternary structure, part of the 50S ribosomal subunit.

Its function is as follows. Binds the 23S rRNA. The polypeptide is Large ribosomal subunit protein bL31 (rpmE) (Ruegeria pomeroyi (strain ATCC 700808 / DSM 15171 / DSS-3) (Silicibacter pomeroyi)).